Here is a 355-residue protein sequence, read N- to C-terminus: Phosphoserine aminotransferase (355 aa).

Arg-41 provides a ligand contact to L-glutamate. Pyridoxal 5'-phosphate is bound by residues 75–76 (AS), Trp-99, Thr-147, Asp-166, and Gln-189. Lys-190 carries the N6-(pyridoxal phosphate)lysine modification. 231–232 (NT) contributes to the pyridoxal 5'-phosphate binding site.

Belongs to the class-V pyridoxal-phosphate-dependent aminotransferase family. SerC subfamily. As to quaternary structure, homodimer. Pyridoxal 5'-phosphate serves as cofactor.

It localises to the cytoplasm. The catalysed reaction is O-phospho-L-serine + 2-oxoglutarate = 3-phosphooxypyruvate + L-glutamate. The enzyme catalyses 4-(phosphooxy)-L-threonine + 2-oxoglutarate = (R)-3-hydroxy-2-oxo-4-phosphooxybutanoate + L-glutamate. It participates in amino-acid biosynthesis; L-serine biosynthesis; L-serine from 3-phospho-D-glycerate: step 2/3. It functions in the pathway cofactor biosynthesis; pyridoxine 5'-phosphate biosynthesis; pyridoxine 5'-phosphate from D-erythrose 4-phosphate: step 3/5. Catalyzes the reversible conversion of 3-phosphohydroxypyruvate to phosphoserine and of 3-hydroxy-2-oxo-4-phosphonooxybutanoate to phosphohydroxythreonine. The protein is Phosphoserine aminotransferase of Bacteroides fragilis (strain ATCC 25285 / DSM 2151 / CCUG 4856 / JCM 11019 / LMG 10263 / NCTC 9343 / Onslow / VPI 2553 / EN-2).